Here is a 149-residue protein sequence, read N- to C-terminus: Calmodulin (149 aa).

Position 2 is an N-acetylalanine (alanine 2). 4 EF-hand domains span residues 8–43, 44–79, 81–116, and 117–149; these read EQIA…LGQN, PTEA…KMKD, DTEE…LGEK, and LTDE…MMAK. Positions 21, 23, 25, 27, 32, 57, 59, 61, 63, 68, 94, 96, 98, and 105 each coordinate Ca(2+). Lysine 116 bears the N6,N6,N6-trimethyllysine mark. Aspartate 130, aspartate 132, aspartate 134, histidine 136, and glutamate 141 together coordinate Ca(2+).

It belongs to the calmodulin family.

Its function is as follows. Calmodulin mediates the control of a large number of enzymes, ion channels and other proteins by Ca(2+). Among the enzymes to be stimulated by the calmodulin-Ca(2+) complex are a number of protein kinases and phosphatases. The polypeptide is Calmodulin (Tetrahymena pyriformis).